Reading from the N-terminus, the 67-residue chain is UPF0434 protein Bcep1808_2639 (67 aa).

Belongs to the UPF0434 family.

The sequence is that of UPF0434 protein Bcep1808_2639 from Burkholderia vietnamiensis (strain G4 / LMG 22486) (Burkholderia cepacia (strain R1808)).